A 974-amino-acid chain; its full sequence is Localization factor PodJL (974 aa).

Coiled-coil stretches lie at residues Asp-81–Gly-163, Val-218–Ala-320, and Gln-375–Ala-469. Disordered stretches follow at residues Ser-460 to Glu-497 and Ala-589 to Lys-611. Positions Ala-589–Glu-598 are enriched in low complexity. Residues Ala-642–Leu-662 traverse the membrane as a helical segment. 3 Sel1-like repeats span residues Pro-757–Asp-793, Pro-794–Leu-829, and Val-830–Asp-865.

Post-translationally, two isoforms exist, the full-length translation product PodJL and a C-terminal truncated form PodJS. Both appear during a specific time period of the cell cycle to control different aspects of polar organelle development.

It is found in the membrane. Its function is as follows. PodJL provides the positional information for the localization of several polar organelles (pili, adhesive holdfast and chemotactic apparatus) by recruiting structural (CpaE) and regulatory (PleC) proteins to a specific cell pole. The protein is Localization factor PodJL (podJ) of Caulobacter vibrioides (strain ATCC 19089 / CIP 103742 / CB 15) (Caulobacter crescentus).